A 459-amino-acid polypeptide reads, in one-letter code: MAESTNLRLRLPLICIILEVILIILFGVLVEYNDDTDAKKWNKNNSTDPATNEFYYRYPSFQDVHVMIFVGFGFLMTFLQRYGFSSMGFNFLIAAFSLQWATLMQGFFHGMHHGKIHVGVTSMINADFCTGAVLISFGAVLGKTSPVQLLVMAILEVTLFAVNEYILLSILGANDAGGSMTIHTFGAYFGLMVTRILHRPNLDKSKHKNSSVYHSDLFAMIGTIFLWMFWPSFNSAITQYGDPQHRTAANTYYSLAACTLATFGFSSLVNPEGKLDMVHIQNAALAGGVAVGTAGEMMLTPFGSMIVGFLAGTISVLGYKYLTPFMESKLKIQDTCGIHNLHGMPGILGAIVGAVTAALASRDVYGNGLDKVFLEAADNSQWSAQTKGGFQAISLAVTLGIALIGGLITGFLLKLPIYGTPPDTQCFEDAVYWEVPGEEEDHHELNEVSTQNEVEKLNS.

Residues 1-10 (MAESTNLRLR) are Cytoplasmic-facing. A helical transmembrane segment spans residues 11–31 (LPLICIILEVILIILFGVLVE). Residues 32-58 (YNDDTDAKKWNKNNSTDPATNEFYYRY) are Extracellular-facing. N-linked (GlcNAc...) asparagine glycosylation occurs at asparagine 45. The chain crosses the membrane as a helical span at residues 59-79 (PSFQDVHVMIFVGFGFLMTFL). At 80–87 (QRYGFSSM) the chain is on the cytoplasmic side. A helical transmembrane segment spans residues 88–108 (GFNFLIAAFSLQWATLMQGFF). Topologically, residues 109–121 (HGMHHGKIHVGVT) are extracellular. The chain crosses the membrane as a helical span at residues 122 to 142 (SMINADFCTGAVLISFGAVLG). The Cytoplasmic portion of the chain corresponds to 143–149 (KTSPVQL). A helical transmembrane segment spans residues 150 to 170 (LVMAILEVTLFAVNEYILLSI). Residues 171-176 (LGANDA) lie on the Extracellular side of the membrane. Residues 177-197 (GGSMTIHTFGAYFGLMVTRIL) form a helical membrane-spanning segment. Topologically, residues 198 to 216 (HRPNLDKSKHKNSSVYHSD) are cytoplasmic. The chain crosses the membrane as a helical span at residues 217–237 (LFAMIGTIFLWMFWPSFNSAI). Over 238-248 (TQYGDPQHRTA) the chain is Extracellular. The chain crosses the membrane as a helical span at residues 249–269 (ANTYYSLAACTLATFGFSSLV). Topologically, residues 270-274 (NPEGK) are cytoplasmic. Residues 275 to 295 (LDMVHIQNAALAGGVAVGTAG) traverse the membrane as a helical segment. Position 296 (glutamate 296) is a topological domain, extracellular. The chain crosses the membrane as a helical span at residues 297 to 317 (MMLTPFGSMIVGFLAGTISVL). At 318-340 (GYKYLTPFMESKLKIQDTCGIHN) the chain is on the cytoplasmic side. A helical transmembrane segment spans residues 341–361 (LHGMPGILGAIVGAVTAALAS). At 362–392 (RDVYGNGLDKVFLEAADNSQWSAQTKGGFQA) the chain is on the extracellular side. The chain crosses the membrane as a helical span at residues 393 to 413 (ISLAVTLGIALIGGLITGFLL). Residues 414–459 (KLPIYGTPPDTQCFEDAVYWEVPGEEEDHHELNEVSTQNEVEKLNS) lie on the Cytoplasmic side of the membrane. The segment at 440–459 (EDHHELNEVSTQNEVEKLNS) is disordered.

It belongs to the ammonium transporter (TC 2.A.49) family. Rh subfamily.

The protein resides in the basolateral cell membrane. The protein localises to the cytoplasmic vesicle membrane. Functionally, functions as an ammonia transporter. May play a role in the elimination of ammonia in the gill. The chain is Ammonium transporter Rh type B (rhbg) from Danio rerio (Zebrafish).